The following is an 804-amino-acid chain: DNA mismatch repair protein MutS (804 aa).

Gly-614–Ser-621 contacts ATP.

This sequence belongs to the DNA mismatch repair MutS family.

Its function is as follows. This protein is involved in the repair of mismatches in DNA. It is possible that it carries out the mismatch recognition step. This protein has a weak ATPase activity. This Ehrlichia chaffeensis (strain ATCC CRL-10679 / Arkansas) protein is DNA mismatch repair protein MutS.